The sequence spans 73 residues: Exodeoxyribonuclease 7 small subunit (73 aa).

It belongs to the XseB family. Heterooligomer composed of large and small subunits.

Its subcellular location is the cytoplasm. It catalyses the reaction Exonucleolytic cleavage in either 5'- to 3'- or 3'- to 5'-direction to yield nucleoside 5'-phosphates.. Its function is as follows. Bidirectionally degrades single-stranded DNA into large acid-insoluble oligonucleotides, which are then degraded further into small acid-soluble oligonucleotides. The sequence is that of Exodeoxyribonuclease 7 small subunit from Streptococcus mutans serotype c (strain ATCC 700610 / UA159).